The primary structure comprises 177 residues: Nucleoside triphosphate/diphosphate phosphatase (177 aa).

The Proton donor role is filled by Arg23. Positions 87, 103, 105, 107, 120, and 123 each coordinate Mg(2+).

This sequence belongs to the Ntdp family. It depends on Mg(2+) as a cofactor.

The catalysed reaction is a ribonucleoside 5'-triphosphate + H2O = a ribonucleoside 5'-diphosphate + phosphate + H(+). It carries out the reaction a ribonucleoside 5'-diphosphate + H2O = a ribonucleoside 5'-phosphate + phosphate + H(+). Functionally, has nucleoside phosphatase activity towards nucleoside triphosphates and nucleoside diphosphates. The sequence is that of Nucleoside triphosphate/diphosphate phosphatase from Enterococcus faecalis (strain ATCC 700802 / V583).